The primary structure comprises 502 residues: Potassium channel KAT3 (502 aa).

Topologically, residues Met-1 to Glu-67 are cytoplasmic. A helical membrane pass occupies residues Thr-68 to Leu-88. Over Arg-89–Pro-95 the chain is Extracellular. A helical membrane pass occupies residues Phe-96 to Val-116. The Cytoplasmic segment spans residues Pro-117–Leu-138. The chain crosses the membrane as a helical span at residues Ser-139–Phe-159. Topologically, residues Asn-160–Lys-169 are extracellular. The chain crosses the membrane as a helical; Voltage-sensor span at residues Phe-170–Glu-190. Topologically, residues Lys-191–Lys-204 are cytoplasmic. A helical membrane pass occupies residues Leu-205 to Asp-225. Over Arg-226–Val-252 the chain is Extracellular. The segment at residues Thr-253 to Ala-272 is an intramembrane region (pore-forming). Over Glu-273–Arg-276 the chain is Extracellular. A helical membrane pass occupies residues Glu-277–Gly-297. Over Asn-298 to Val-502 the chain is Cytoplasmic. A nucleoside 3',5'-cyclic phosphate is bound at residue Leu-381 to Val-500.

The protein belongs to the potassium channel family. Plant (TC 1.A.1.4) subfamily.

The protein localises to the membrane. Probable inward-rectifying potassium channel. Assuming opened or closed conformations in response to the voltage difference across the membrane, the channel is activated by hyperpolarization. In Oryza sativa subsp. japonica (Rice), this protein is Potassium channel KAT3.